Here is a 132-residue protein sequence, read N- to C-terminus: Small ribosomal subunit protein uS8 (132 aa).

This sequence belongs to the universal ribosomal protein uS8 family. Part of the 30S ribosomal subunit. Contacts proteins S5 and S12.

Its function is as follows. One of the primary rRNA binding proteins, it binds directly to 16S rRNA central domain where it helps coordinate assembly of the platform of the 30S subunit. The polypeptide is Small ribosomal subunit protein uS8 (Mycobacterium leprae (strain Br4923)).